A 332-amino-acid polypeptide reads, in one-letter code: D-amino acid oxidase (332 aa).

Positions 8, 9, 10, 39, 40, 45, 46, 47, 161, and 180 each coordinate FAD. The D-proline site is built by Tyr-218 and Arg-274. D-serine is bound by residues Tyr-218 and Arg-274. The FAD site is built by Arg-274, Gly-305, Gly-306, Gly-308, and Thr-310. Gly-306 is a binding site for D-proline. Gly-306 is a D-serine binding site. The Microbody targeting signal signature appears at 330 to 332 (AKL).

This sequence belongs to the DAMOX/DASOX family. FAD is required as a cofactor.

The protein localises to the peroxisome matrix. It catalyses the reaction a D-alpha-amino acid + O2 + H2O = a 2-oxocarboxylate + H2O2 + NH4(+). The enzyme catalyses D-alanine + O2 + H2O = pyruvate + H2O2 + NH4(+). The catalysed reaction is D-arginine + O2 + H2O = 5-guanidino-2-oxopentanoate + H2O2 + NH4(+). It carries out the reaction D-asparagine + O2 + H2O = 2-oxosuccinamate + H2O2 + NH4(+). It catalyses the reaction D-cysteine + O2 + H2O = 2-oxo-3-sulfanylpropanoate + H2O2 + NH4(+). The enzyme catalyses D-glutamine + O2 + H2O = 2-oxoglutaramate + H2O2 + NH4(+). The catalysed reaction is D-isoleucine + O2 + H2O = (R)-3-methyl-2-oxopentanoate + H2O2 + NH4(+). It carries out the reaction D-leucine + O2 + H2O = 4-methyl-2-oxopentanoate + H2O2 + NH4(+). It catalyses the reaction D-lysine + O2 + H2O = 6-amino-2-oxohexanoate + H2O2 + NH4(+). The enzyme catalyses D-methionine + O2 + H2O = 4-methylsulfanyl-2-oxobutanoate + H2O2 + NH4(+). The catalysed reaction is D-phenylalanine + O2 + H2O = 3-phenylpyruvate + H2O2 + NH4(+). It carries out the reaction D-proline + O2 = 1-pyrroline-2-carboxylate + H2O2. It catalyses the reaction D-valine + O2 + H2O = 3-methyl-2-oxobutanoate + H2O2 + NH4(+). The enzyme catalyses D-histidine + O2 + H2O = 3-(imidazol-5-yl)pyruvate + H2O2 + NH4(+). The catalysed reaction is D-tyrosine + O2 + H2O = 3-(4-hydroxyphenyl)pyruvate + H2O2 + NH4(+). It carries out the reaction D-serine + O2 + H2O = 3-hydroxypyruvate + H2O2 + NH4(+). It catalyses the reaction D-threonine + O2 + H2O = (S)-3-hydroxy-2-oxobutanoate + H2O2 + NH4(+). The enzyme catalyses D-tryptophan + O2 + H2O = indole-3-pyruvate + H2O2 + NH4(+). Catalyzes the oxidative deamination of D-amino acids with broad substrate specificity. Could be responsible for the degradation of diet-derived D-alanine in the intestine. Maintains the asexual state of worms and represses early ovarian development. Following sexual induction, the enzyme is required for differentiation of oogonia into oocytes in the developing ovaries. This is D-amino acid oxidase from Dugesia ryukyuensis (Freshwater planarian flatworm).